The chain runs to 99 residues: Integration host factor subunit alpha (99 aa).

The interval 49 to 70 is disordered; the sequence is FGNFDLRDKNQRPGRNPKTGED.

Belongs to the bacterial histone-like protein family. Heterodimer of an alpha and a beta chain.

In terms of biological role, this protein is one of the two subunits of integration host factor, a specific DNA-binding protein that functions in genetic recombination as well as in transcriptional and translational control. The protein is Integration host factor subunit alpha of Cronobacter sakazakii (strain ATCC BAA-894) (Enterobacter sakazakii).